Consider the following 449-residue polypeptide: UMP-CMP kinase 2, mitochondrial (449 aa).

The N-terminal 98 residues, 1–98 (MAFARRLLRG…VRAARLHQRL (98 aa)), are a transit peptide targeting the mitochondrion. 259–266 (GLDATGKT) serves as a coordination point for ATP. Residues 380–412 (EERLQRLQGRGMEKTREEAELEANSVFRQKVEM) adopt a coiled-coil conformation.

Belongs to the thymidylate kinase family. High levels are observed in myeloid, lymphoid and mesenchymal tissues.

The protein resides in the mitochondrion. The catalysed reaction is CMP + ATP = CDP + ADP. The enzyme catalyses dCMP + ATP = dCDP + ADP. It catalyses the reaction a 2'-deoxyribonucleoside 5'-diphosphate + ATP = a 2'-deoxyribonucleoside 5'-triphosphate + ADP. It carries out the reaction a ribonucleoside 5'-diphosphate + ATP = a ribonucleoside 5'-triphosphate + ADP. Its function is as follows. Mitochondrial nucleotide monophosphate kinase needed for salvage dNTP synthesis that mediates immunomodulatory and antiviral activities through IFN-dependent and IFN-independent pathways. Restricts the replication of multiple viruses including flaviviruses or coronaviruses. Together with viperin/RSAD2 and ddhCTP, suppresses the replication of several coronaviruses through inhibition of the viral RNA-dependent RNA polymerase activities. Concerning flaviviruses, restricts RNA translation when localized to the mitochondria independently of its kinase activity. Is able to phosphorylate dUMP, dCMP, CMP, UMP and monophosphates of the pyrimidine nucleoside analogs ddC, dFdC, araC, BVDU and FdUrd with ATP as phosphate donor. Efficacy is highest for dUMP followed by dCMP while CMP and UMP are poor substrates. Controls therefore mitochondrial DNA synthesis by supplying required deoxyribonucleotides. CMPK2-dependent mitochondrial DNA synthesis is necessary for the production of oxidized mitochondrial DNA fragments after exposure to NLRP3 activators. In turn, cytosolic oxidized mtDNA associates with the NLRP3 inflammasome complex and is required for its activation. This is UMP-CMP kinase 2, mitochondrial (CMPK2) from Homo sapiens (Human).